Reading from the N-terminus, the 142-residue chain is Large ribosomal subunit protein uL13 (142 aa).

The protein belongs to the universal ribosomal protein uL13 family. In terms of assembly, part of the 50S ribosomal subunit.

Functionally, this protein is one of the early assembly proteins of the 50S ribosomal subunit, although it is not seen to bind rRNA by itself. It is important during the early stages of 50S assembly. This chain is Large ribosomal subunit protein uL13, found in Laribacter hongkongensis (strain HLHK9).